The chain runs to 1054 residues: Putative disease resistance RPP13-like protein 1 (1054 aa).

Leucine-zipper regions lie at residues 9-20 (LAAFLQALFQTL) and 39-53 (LERLSTALLTITAVL). Residues 117-147 (DFLDGNSEHLETRLEKVTIRLERLASQRNIL) are a coiled coil. In terms of domain architecture, NB-ARC spans 152–462 (LTAMIPKQRL…AEGFLQQTRS (311 aa)). Position 203-210 (203-210 (GIGGVGKT)) interacts with ATP. LRR repeat units lie at residues 579-600 (RLRVLSLSHYKIARLPPDFFKN), 603-624 (HARFLDLSRTELEKLPKSLCYM), 626-648 (NLQTLLLSYCSSLKELPTDISNL), 650-672 (NLRYLDLIGTKLRQMPRRFGRLK), and 676-697 (TLTTFFVSASDGSRISELGGLH). Residues 1018–1054 (PQYHHPQFHLPRSNVSGSPKSHGSHRSYDSRSSSRYD) form a disordered region. The segment covering 1043 to 1054 (RSYDSRSSSRYD) has biased composition (basic and acidic residues).

Belongs to the disease resistance NB-LRR family. RPP13 subfamily.

In terms of biological role, potential disease resistance protein. The polypeptide is Putative disease resistance RPP13-like protein 1 (RPPL1) (Arabidopsis thaliana (Mouse-ear cress)).